The following is a 178-amino-acid chain: Inorganic pyrophosphatase (178 aa).

Residues Lys30, Arg44, and Tyr56 each coordinate substrate. Mg(2+) contacts are provided by Asp66, Asp71, and Asp103. Tyr142 contacts substrate.

Belongs to the PPase family. In terms of assembly, homohexamer. The cofactor is Mg(2+).

It is found in the cytoplasm. It carries out the reaction diphosphate + H2O = 2 phosphate + H(+). In terms of biological role, catalyzes the hydrolysis of inorganic pyrophosphate (PPi) forming two phosphate ions. The protein is Inorganic pyrophosphatase of Bradyrhizobium diazoefficiens (strain JCM 10833 / BCRC 13528 / IAM 13628 / NBRC 14792 / USDA 110).